We begin with the raw amino-acid sequence, 205 residues long: MIDIKELKFDEKGLIPAIVQDYYTKQVLMLAYMNEESLKLTLEKGETYFFSRSRGKIWHKGETSGNTQKVKKIFYDCDEDALLIQVEAKGPACHTGNISCFYRSFDEETEDGIEILNKLYERIKGRKINPVEGSYTNYLFEKGIDKILKKVGEEATEVVIASKNDSKDEIVYEVSDLIYHLMVLLVEKNITLNDIYNELERRYKK.

Positions 1 to 115 are phosphoribosyl-AMP cyclohydrolase; that stretch reads MIDIKELKFD…DEETEDGIEI (115 aa). Residues 116–205 are phosphoribosyl-ATP pyrophosphohydrolase; it reads LNKLYERIKG…YNELERRYKK (90 aa).

The protein in the N-terminal section; belongs to the PRA-CH family. This sequence in the C-terminal section; belongs to the PRA-PH family.

The protein resides in the cytoplasm. It carries out the reaction 1-(5-phospho-beta-D-ribosyl)-ATP + H2O = 1-(5-phospho-beta-D-ribosyl)-5'-AMP + diphosphate + H(+). It catalyses the reaction 1-(5-phospho-beta-D-ribosyl)-5'-AMP + H2O = 1-(5-phospho-beta-D-ribosyl)-5-[(5-phospho-beta-D-ribosylamino)methylideneamino]imidazole-4-carboxamide. The protein operates within amino-acid biosynthesis; L-histidine biosynthesis; L-histidine from 5-phospho-alpha-D-ribose 1-diphosphate: step 2/9. Its pathway is amino-acid biosynthesis; L-histidine biosynthesis; L-histidine from 5-phospho-alpha-D-ribose 1-diphosphate: step 3/9. This chain is Histidine biosynthesis bifunctional protein HisIE, found in Caldanaerobacter subterraneus subsp. tengcongensis (strain DSM 15242 / JCM 11007 / NBRC 100824 / MB4) (Thermoanaerobacter tengcongensis).